The sequence spans 365 residues: Phosphatidylcholine:ceramide cholinephosphotransferase 2 (365 aa).

Residues 9–50 (LEGHLESQTNDSTNTYTSPTEAVEEEGKNGKGKPKTLSNGLR) form a disordered region. Residues 14 to 28 (ESQTNDSTNTYTSPT) are compositionally biased toward polar residues. Transmembrane regions (helical) follow at residues 80–100 (GIAF…ITVV), 128–148 (FSVS…QWLF), 159–179 (FFFI…VTTL), 219–239 (ILCG…TYLF), and 248–268 (FWWY…CILV). His-229 is a catalytic residue. Catalysis depends on residues His-272 and Asp-276. A helical membrane pass occupies residues 273-290 (YTVDVIIAYYITTRLFWW). Over 291–365 (YHSMANEKNL…KIGEDNEKST (75 aa)) the chain is Cytoplasmic. S-palmitoyl cysteine attachment occurs at residues Cys-331, Cys-332, Cys-343, and Cys-348.

The protein belongs to the sphingomyelin synthase family. Palmitoylated on Cys-331, Cys-332, Cys-343 and Cys-348; which plays an important role in plasma membrane localization. In terms of tissue distribution, highest expression is detected in cortical bone, followed by vertebrae, kidney and liver. Expression levels are very low in spleen, muscle, heart, brown fat and thymus. Expressed in macrophages.

Its subcellular location is the cell membrane. It is found in the golgi apparatus membrane. The catalysed reaction is an N-acylsphing-4-enine + a 1,2-diacyl-sn-glycero-3-phosphocholine = a sphingomyelin + a 1,2-diacyl-sn-glycerol. The enzyme catalyses an N-acylsphinganine + a 1,2-diacyl-sn-glycero-3-phosphocholine = an N-acylsphinganine-1-phosphocholine + a 1,2-diacyl-sn-glycerol. It catalyses the reaction an N-acyl-(4R)-4-hydroxysphinganine + a 1,2-diacyl-sn-glycero-3-phosphocholine = an N-acyl-(4R)-4-hydroxysphinganine-phosphocholine + a 1,2-diacyl-sn-glycerol. It carries out the reaction an N-acylsphing-4-enine + a 1,2-diacyl-sn-glycero-3-phosphoethanolamine = an N-acylsphing-4-enine 1-phosphoethanolamine + a 1,2-diacyl-sn-glycerol. The catalysed reaction is an N-acylsphinganine + a 1,2-diacyl-sn-glycero-3-phosphoethanolamine = an N-acylsphinganine-1-phosphoethanolamine + a 1,2-diacyl-sn-glycerol. The enzyme catalyses an N-acyl-(4R)-4-hydroxysphinganine + a 1,2-diacyl-sn-glycero-3-phosphoethanolamine = an N-acyl-(4R)-4-hydroxysphinganine-1-phosphoethanolamine + a 1,2-diacyl-sn-glycerol. It catalyses the reaction 1,2-dihexadecanoyl-sn-glycero-3-phosphocholine + an N-acylsphing-4-enine = 1,2-dihexadecanoyl-sn-glycerol + a sphingomyelin. It carries out the reaction 1-(9Z-octadecenoyl)-2-acyl-sn-3-glycerol + a sphingomyelin = a 1-(9Z-octadecenoyl)-2-acyl-sn-glycero-3-phosphocholine + an N-acylsphing-4-enine. The catalysed reaction is N-hexadecanoylsphinganine + a 1,2-diacyl-sn-glycero-3-phosphocholine = N-hexadecanoyl-sphinganine-1-phosphocholine + a 1,2-diacyl-sn-glycerol. The enzyme catalyses N-hexadecanoyl-(4R)-hydroxysphinganine + a 1,2-diacyl-sn-glycero-3-phosphocholine = N-hexadecanoyl-(4R)-hydroxysphinganine-phosphocholine + a 1,2-diacyl-sn-glycerol. It catalyses the reaction N-hexadecanoylsphinganine + a 1,2-diacyl-sn-glycero-3-phosphoethanolamine = N-hexadecanoyl-sphinganine-1-phosphoethanolamine + a 1,2-diacyl-sn-glycerol. It carries out the reaction N-hexadecanoyl-(4R)-hydroxysphinganine + a 1,2-diacyl-sn-glycero-3-phosphoethanolamine = N-hexadecanoyl-(4R)-hydroxysphinganine-1-phosphoethanolamine + a 1,2-diacyl-sn-glycerol. It functions in the pathway sphingolipid metabolism. Sphingomyelin synthase that primarily contributes to sphingomyelin synthesis and homeostasis at the plasma membrane. Catalyzes the reversible transfer of phosphocholine moiety in sphingomyelin biosynthesis: in the forward reaction transfers phosphocholine head group of phosphatidylcholine (PC) on to ceramide (CER) to form ceramide phosphocholine (sphingomyelin, SM) and diacylglycerol (DAG) as by-product, and in the reverse reaction transfers phosphocholine from SM to DAG to form PC and CER. The direction of the reaction appears to depend on the levels of CER and DAG in the plasma membrane. Does not use free phosphorylcholine or CDP-choline as donors. Can also transfer phosphoethanolamine head group of phosphatidylethanolamine (PE) on to ceramide (CER) to form ceramide phosphoethanolamine (CPE). Regulates receptor-mediated signal transduction via mitogenic DAG and proapoptotic CER, as well as via SM, a structural component of membrane rafts that serve as platforms for signal transduction and protein sorting. To a lesser extent, plays a role in secretory transport via regulation of DAG pool at the Golgi apparatus and its downstream effects on PRKD1. Required for normal bone matrix mineralization. The protein is Phosphatidylcholine:ceramide cholinephosphotransferase 2 (Sgms2) of Mus musculus (Mouse).